A 301-amino-acid polypeptide reads, in one-letter code: Ribonuclease Z (301 aa).

Residues H61, H63, D65, H66, H140, D211, and H269 each contribute to the Zn(2+) site. The Proton acceptor role is filled by D65.

It belongs to the RNase Z family. As to quaternary structure, homodimer. The cofactor is Zn(2+).

The catalysed reaction is Endonucleolytic cleavage of RNA, removing extra 3' nucleotides from tRNA precursor, generating 3' termini of tRNAs. A 3'-hydroxy group is left at the tRNA terminus and a 5'-phosphoryl group is left at the trailer molecule.. In terms of biological role, zinc phosphodiesterase, which displays some tRNA 3'-processing endonuclease activity. Probably involved in tRNA maturation, by removing a 3'-trailer from precursor tRNA. The sequence is that of Ribonuclease Z from Bradyrhizobium sp. (strain ORS 278).